Consider the following 288-residue polypeptide: Transmembrane and coiled-coil domain-containing protein 5A (288 aa).

Residues 10–192 (KRNIISLNMD…ALFLEREVSK (183 aa)) adopt a coiled-coil conformation. Residues 224 to 244 (IFCCLFFITLFFIRLLSYMFF) traverse the membrane as a helical segment.

This sequence belongs to the TMCO5 family.

The protein localises to the endoplasmic reticulum membrane. Its subcellular location is the nucleus membrane. The sequence is that of Transmembrane and coiled-coil domain-containing protein 5A (TMCO5A) from Homo sapiens (Human).